The following is a 61-amino-acid chain: Small ribosomal subunit protein uS14 (61 aa).

Zn(2+)-binding residues include C24, C27, C40, and C43.

Belongs to the universal ribosomal protein uS14 family. Zinc-binding uS14 subfamily. In terms of assembly, part of the 30S ribosomal subunit. Contacts proteins S3 and S10. The cofactor is Zn(2+).

In terms of biological role, binds 16S rRNA, required for the assembly of 30S particles and may also be responsible for determining the conformation of the 16S rRNA at the A site. This Natranaerobius thermophilus (strain ATCC BAA-1301 / DSM 18059 / JW/NM-WN-LF) protein is Small ribosomal subunit protein uS14.